Here is a 603-residue protein sequence, read N- to C-terminus: Nuclear receptor subfamily 2 group C member 1 (603 aa).

Residues 1–178 form a required for interaction with KAT2B region; it reads MATIEEIAHQ…RLQRCIAFGM (178 aa). Positions 110-185 form a DNA-binding region, nuclear receptor; that stretch reads FDLCVVCGDK…FGMKQDSVQC (76 aa). NR C4-type zinc fingers lie at residues 113–133 and 149–173; these read CVVCGDKASGRHYGAVTCEGC and CRGSKDCIINKHHRNRCQYCRLQRC. 2 positions are modified to phosphoserine: Ser-197 and Ser-215. The residue at position 220 (Thr-220) is a Phosphothreonine. Position 222 is a phosphothreonine; by MAPK1 (Thr-222). Lys-250 participates in a covalent cross-link: Glycyl lysine isopeptide (Lys-Gly) (interchain with G-Cter in SUMO2). Positions 348-590 constitute an NR LBD domain; sequence GSVHLITGDS…SVIPHILKME (243 aa). Position 581 is a phosphoserine; by PKC (Ser-581). Residues 584–603 are required for interaction with NRIP1; it reads PHILKMEPADYNSQIIGHSI. Residue Lys-588 forms a Glycyl lysine isopeptide (Lys-Gly) (interchain with G-Cter in SUMO2) linkage.

It belongs to the nuclear hormone receptor family. NR2 subfamily. Homodimer. Heterodimer; binds DNA as a heterodimer with NR2C2 required for chromatin remodeling and for binding to promoter regions such as globin DR1 repeats. Interacts with NRIP1 (via its LXXLL motifs); the interaction provides corepressor activity. Interacts with HDAC3 (via the DNA-binding domain). Interacts with HDAC4 (via the DNA-binding domain). Interacts with PIAS1; the interaction is required for sumoylation of NR2C1. Interacts with UBE2I; the interaction is required for sumoylation of NR2C1. Interacts with KAT2B; the interaction acts as a corepressor of gene expression. Interacts with ESR1; the interaction prevents homodimerization of ESR1 and suppresses its transcriptional activity and cell growth. Post-translationally, sumoylation requires both PIAS1 and UBE2I. Sumoylation appears to dissociate NR2C1 from the PML nuclear bodies. Enhances the interaction with NRIP1 but inhibits interaction with KAT2B. In proliferating cells, stimulation by all-trans retinoic acid, activation of MAPK1-mediated phosphorylation and recruitment to PML bodies with subsequent sumoylation, suppresses OCT4 expression. In terms of processing, phosphorylated on several serine and threonine residues. Phosphorylation on Thr-222, stimulated by all-trans retinoic acid (atRA) mediates PML location and sumoylation in proliferating cells which then modulates its association with effector molecules, KAT2B and NRIP1. Phosphorylation on Ser-581 by PKC is important for protein stability and function as activator of RARB.

The protein localises to the nucleus. It localises to the PML body. Its function is as follows. Orphan nuclear receptor. Binds the IR7 element in the promoter of its own gene in an autoregulatory negative feedback mechanism. Primarily repressor of a broad range of genes. Binds to hormone response elements (HREs) consisting of two 5'-AGGTCA-3' half site direct repeat consensus sequences. Together with NR2C2, forms the core of the DRED (direct repeat erythroid-definitive) complex that represses embryonic and fetal globin transcription. Also activator of OCT4 gene expression. May be involved in stem cell proliferation and differentiation. Mediator of retinoic acid-regulated preadipocyte proliferation. The sequence is that of Nuclear receptor subfamily 2 group C member 1 (NR2C1) from Homo sapiens (Human).